Consider the following 760-residue polypeptide: MGCRYAVLALAVAYFAGSIAANDSQIVAVKGPASIRFTPAIHVVRGRFLRAANTADERNEDRGINLKSMPGFEKIASLFTKKNTPGPLLSWFEKKKSPDYVFLKLKINKGKQQLFDHPDWNVWVQYTTSVVKSDPEEAMIAALRTHYTDDILSKLLESAKNVPKTSGLATKMQMEHWVASKTPSQMFQFLRLDKVRNGVLDDPTLSIWINYMKLYNSKPVNKKQQVTLVSMLTTHYKDRGVLDIIEAAKKVPKTAPAARQLEMEQIQFWLKNGKSPDELLTVLSLDKAGNQLLASPRFKFWSKYVDNYNRDFPDEATTVMATLRNQLGDEDITPILIAAGKVPSTEKAAAKLQAEQFKSWLRENEDPAKVFQLLKLDNSADDLLGSPQFKLWGKYVEDLNLKPEHNDLQVSIITILRKNYGDDVLGNMVLAGKKAPSTSFMARRLEDELYKGWIAAGSSPDGVFKHLKFDKAGENVIQSPLWGLYTKFLEHYYKSFPTPMMSALAKGYDGDALAKLLIAAEKIPTSNTLATKLQTGQIQRWLDDKDQPGKIFKALLLDDMADDILTSPLFNTWTRYLDEFNKKFPDEKVSMTDTFRTSLDDETLKSLLITAKELPDMKTLSTKLQTVQIERWLASKTSPEDAFAVLALNKAGGNVLSKPLLNTWAAYLESFNAKFPRSRVSMIDTFREFFGDKALLTTLAAAKEVESTKKVATSLQDSLLSKWVLAKKPPSGVAKLVGTDEAGAKLLKTYTTKYMERYGQ.

Positions 1–21 are cleaved as a signal peptide; that stretch reads MGCRYAVLALAVAYFAGSIAA. Positions 47–62 match the RxLR-dEER motif; that stretch reads RFLRAANTADERNEDR. The WY1 repeat unit spans residues 87 to 134; that stretch reads PLLSWFEKKKSPDYVFLKLKINKGKQQLFDHPDWNVWVQYTTSVVKSD. Positions 87–760 are 7 X 93 AA tandem repeats; the sequence is PLLSWFEKKK…TTKYMERYGQ (674 aa). An LWY2 repeat occupies 135-221; that stretch reads PEEAMIAALR…MKLYNSKPVN (87 aa). The stretch at 222–312 is one LWY3 repeat; that stretch reads KKQQVTLVSM…KYVDNYNRDF (91 aa). The LWY4 repeat unit spans residues 313 to 403; that stretch reads PDEATTVMAT…KYVEDLNLKP (91 aa). The LWY5 repeat unit spans residues 404–496; that stretch reads EHNDLQVSII…KFLEHYYKSF (93 aa). The stretch at 497–584 is one LWY6 repeat; it reads PTPMMSALAK…RYLDEFNKKF (88 aa). One copy of the LWY7 repeat lies at 585–760; that stretch reads PDEKVSMTDT…TTKYMERYGQ (176 aa).

The protein belongs to the RxLR effector family. In terms of assembly, interacts with host dsRNA-binding protein DRB4.

It is found in the secreted. Its subcellular location is the host cell. Its function is as follows. Secreted effector that possesses RNA silencing suppression activity by inhibiting the biogenesis of small RNAs in the host plant to promote enhanced susceptibility of host to the pathogen during infection. Interferes with secondary siRNA production by associating with host dsRNA-binding protein DRB4. Inhibits the host salicylic acid pathway during infection. The polypeptide is RxLR effector protein PSR2 (Phytophthora infestans (strain T30-4) (Potato late blight agent)).